The sequence spans 766 residues: MQRAGSSGARGECDISGAGRLRLEQAARLGGRTVHTSPGGGLGARQAAGMSAKERPKGKVIKDSVTLLPCFYFVELPILASSVVSLYFLELTDVFKPVHSGFSCYDRSLSMPYIEPTQEAIPFLMLLSLAFAGPAITIMVGEGILYCCLSKRRNGAGLEPNINAGGCNFNSFLRRAVRFVGVHVFGLCSTALITDIIQLSTGYQAPYFLTVCKPNYTSLNVSCKENSYIVEDICSGSDLTVINSGRKSFPSQHATLAAFAAVYVSMYFNSTLTDSSKLLKPLLVFTFIICGIICGLTRITQYKNHPVDVYCGFLIGGGIALYLGLYAVGNFLPSEDSMLQHRDALRSLTDLNQDPSRVLSAKNGSSGDGIAHTEGILNRNHRDASSLTNLKRANADVEIITPRSPMGKESMVTFSNTLPRANTPSVEDPVRRNASIHASMDSARSKQLLTQWKSKNESRKMSLQVMDTEPEGQSPPRSIEMRSSSEPSRVGVNGDHHVPGNQYLKIQPGTVPGCNNSMPGGPRVSIQSRPGSSQLVHIPEETQENISTSPKSSSARAKWLKAAEKTVACNRSNNQPRIMQVIAMSKQQGVLQSSPKNAEGSTVTCTGSIRYKTLTDHEPSGIVRVEAHPENNRPIIQIPSSTEGEGSGSWKWKAPEKSSLRQTYELNDLNRDSESCESLKDSFGSGDRKRSNIDSNEHHHHGITTIRVTPVEGSEIGSETLSVSSSRDSTLRRKGNIILIPERSNSPENTRNIFYKGTSPTRAYKD.

A Phosphoserine modification is found at S37. 3 consecutive transmembrane segments (helical) span residues 68 to 88 (LPCFYFVELPILASSVVSLYF), 120 to 140 (AIPFLMLLSLAFAGPAITIMV), and 179 to 199 (FVGVHVFGLCSTALITDIIQL). Residues N215 and N220 are each glycosylated (N-linked (GlcNAc...) asparagine). Residues 248-268 (SFPSQHATLAAFAAVYVSMYF) form a helical membrane-spanning segment. N-linked (GlcNAc...) asparagine glycosylation is present at N269. 2 helical membrane passes run 277 to 297 (KLLKPLLVFTFIICGIICGLT) and 309 to 329 (VYCGFLIGGGIALYLGLYAVG). The residue at position 347 (S347) is a Phosphoserine. N-linked (GlcNAc...) asparagine glycosylation is present at N363. The residue at position 386 (S386) is a Phosphoserine. Residue N433 is glycosylated (N-linked (GlcNAc...) asparagine). S439 bears the Phosphoserine mark. The interval 454–494 (SKNESRKMSLQVMDTEPEGQSPPRSIEMRSSSEPSRVGVNG) is disordered. N456 carries an N-linked (GlcNAc...) asparagine glycan. A phosphoserine mark is found at S462 and S474. 3 N-linked (GlcNAc...) asparagine glycosylation sites follow: N515, N545, and N570. S608 is subject to Phosphoserine. Disordered stretches follow at residues 634-654 (PIIQIPSSTEGEGSGSWKWKA), 672-701 (DSESCESLKDSFGSGDRKRSNIDSNEHHHH), and 742-766 (ERSNSPENTRNIFYKGTSPTRAYKD). Positions 672–697 (DSESCESLKDSFGSGDRKRSNIDSNE) are enriched in basic and acidic residues. Residues 743-752 (RSNSPENTRN) show a composition bias toward polar residues.

It belongs to the PA-phosphatase related phosphoesterase family. Post-translationally, O-glycosylated. Probably at Ser-347. In terms of tissue distribution, brain-specific, it is exclusively expressed in neurons (at protein level).

The protein localises to the postsynaptic density membrane. In terms of biological role, postsynaptic density membrane protein that indirectly regulates glutamatergic synaptic transmission through lysophosphatidic acid (LPA)-mediated signaling pathways. Binds lysophosphatidic acid (LPA) and mediates its internalization into cells. Could act as receptor or a transporter of this lipid at the post-synaptic membrane. Modulates lysophosphatidic acid (LPA) activity in neuron axonal outgrowth during development by attenuating phospholipid-induced axon collapse. The protein is Phospholipid phosphatase-related protein type 4 of Mus musculus (Mouse).